The following is a 375-amino-acid chain: CMP-N-acetylneuraminate-beta-1,4-galactoside alpha-2,3-sialyltransferase (375 aa).

Over 1 to 8 (MGLLVFVR) the chain is Cytoplasmic. The helical; Signal-anchor for type II membrane protein transmembrane segment at 9–28 (NLLLALCLFLVLGFLYYSAW) threads the bilayer. At 29 to 375 (KLHLLQWEED…RVITDLSSGI (347 aa)) the chain is on the lumenal side. Residues N80 and N171 are each glycosylated (N-linked (GlcNAc...) asparagine). C160 and C314 are oxidised to a cystine.

It belongs to the glycosyltransferase 29 family. The soluble form derives from the membrane form by proteolytic processing. As to expression, highly expressed in adult skeletal muscle and in all fetal tissues examined and to a much lesser extent in placenta, lung and liver.

The protein localises to the golgi apparatus. It localises to the golgi stack membrane. It is found in the secreted. It carries out the reaction a beta-D-galactosyl-(1-&gt;4)-N-acetyl-beta-D-glucosaminyl derivative + CMP-N-acetyl-beta-neuraminate = an N-acetyl-alpha-neuraminyl-(2-&gt;3)-beta-D-galactosyl-(1-&gt;4)-N-acetyl-beta-D-glucosaminyl derivative + CMP + H(+). It participates in protein modification; protein glycosylation. Catalyzes the formation of the NeuAc-alpha-2,3-Gal-beta-1,4-GlcNAc-, NeuAc-alpha-2,3-Gal-beta-1,3-GlcNAc- and NeuAc-alpha-2,3-Gal-beta-1,3-GalNAc- sequences found in terminal carbohydrate groups of glycoproteins and glycolipids. The highest activity is toward Gal-beta-1,3-GlcNAc and the lowest toward Gal-beta-1,3-GalNAc. The sequence is that of CMP-N-acetylneuraminate-beta-1,4-galactoside alpha-2,3-sialyltransferase (ST3GAL3) from Homo sapiens (Human).